The chain runs to 691 residues: MGKNIIAGSISSSIHKSYEIGSQIGNGKFAQVHSGTNKSTGKKSAIKIMKKSIVEESAIIKEIEMMTEINHQNIIKLQEVYETDNEVLLVLELVTGGELFDKIVEREFYTEQDASTLIGTVTKVIQYLHSKDIVHCDLKPENLLYSDNSDQAIIKLCDFGLSQRCGSGSPLRSLVGTLTYMAPEISSCTGYGKPVDLWSIGVISYILLCGFPPFDETTGYVLEFPSPEWDNISDSAKSLIKGLLNNDPSKRFTIDQTLKHPWIAGTTCGKNSIVGTLKTLREFNTLRRTNGGNTTMGHNKQSRSTVFELFPSLTPIKSNDENNNNNNNNNNNNNNNEILDKKSNENENENENDKIKINLELNLNNNVNNNNNNNNNTVILENNNNNLEKISTTKTTTTTSTINDSINKTKIQLMNSLDFENDSSSSETYSSSSPIENGGGGGDKFTSPELSSLSIDLGCASDQLNSDKEKIIEQLKNEKSLLQKELLEIKRQSPVPSPSSSFLNNHLQQQHNNNINNNNNNINNGGSTSINNGNGTIERQFRPIHMSKDSDSGSYENLLLGTSPFVKNHNNNNINNNNNNFCHSRNSSFGYGNSYNSSNGGSGCSSSSDESTGGSFKKDKSKYGVDRICLDLQSEFEKLSLPKETMDKLASVLSNYKQKNQEKSLKVKYEKQKDKYKKLKSQLKKDKSLLK.

In terms of domain architecture, Protein kinase spans 18 to 263 (YEIGSQIGNG…IDQTLKHPWI (246 aa)). ATP is bound by residues 24–32 (IGNGKFAQV) and lysine 47. Aspartate 137 (proton acceptor) is an active-site residue. 4 disordered regions span residues 314-350 (TPIKSNDENNNNNNNNNNNNNNNEILDKKSNENENEN), 420-447 (ENDSSSSETYSSSSPIENGGGGGDKFTS), 510-536 (QHNNNINNNNNNINNGGSTSINNGNGT), and 600-620 (GGSGCSSSSDESTGGSFKKDK). Over residues 322 to 336 (NNNNNNNNNNNNNNN) the composition is skewed to low complexity. Basic and acidic residues predominate over residues 338-350 (ILDKKSNENENEN). Composition is skewed to low complexity over residues 423–433 (SSSSETYSSSS), 512–536 (NNNINNNNNNINNGGSTSINNGNGT), and 600–615 (GGSGCSSSSDESTGGS). Residues 642–691 (PKETMDKLASVLSNYKQKNQEKSLKVKYEKQKDKYKKLKSQLKKDKSLLK) are a coiled coil.

It belongs to the protein kinase superfamily. CAMK Ser/Thr protein kinase family.

It catalyses the reaction L-seryl-[protein] + ATP = O-phospho-L-seryl-[protein] + ADP + H(+). The enzyme catalyses L-threonyl-[protein] + ATP = O-phospho-L-threonyl-[protein] + ADP + H(+). The polypeptide is Probable serine/threonine-protein kinase pXi (pXi) (Dictyostelium discoideum (Social amoeba)).